The following is a 199-amino-acid chain: TATA-box-binding protein (199 aa).

Tandem repeats lie at residues 10–86 (IENI…VKLL) and 101–177 (VQNI…YNQL).

Belongs to the TBP family.

Functionally, general factor that plays a role in the activation of archaeal genes transcribed by RNA polymerase. Binds specifically to the TATA box promoter element which lies close to the position of transcription initiation. This Pyrobaculum islandicum (strain DSM 4184 / JCM 9189 / GEO3) protein is TATA-box-binding protein.